Reading from the N-terminus, the 640-residue chain is Lysophospholipase (640 aa).

The N-terminal stretch at M1 to A25 is a signal peptide. The PLA2c domain maps to D38–D589. N-linked (GlcNAc...) asparagine glycans are attached at residues N84, N126, N163, N173, N218, N280, N310, N317, N348, N391, N492, N516, N544, N568, and N585. Residues I594–S610 are compositionally biased toward low complexity. The tract at residues I594 to S616 is disordered.

The protein belongs to the lysophospholipase family. In terms of processing, highly glycosylated.

The protein localises to the secreted. The enzyme catalyses a 1-acyl-sn-glycero-3-phosphocholine + H2O = sn-glycerol 3-phosphocholine + a fatty acid + H(+). In terms of biological role, catalyzes the release of fatty acids from lysophospholipids. At acidic pH the enzyme hydrolyzes all phospholipid substrates without metal ion. On the other hand, at alkaline pH the enzyme shows substrate specificity for phosphatidylcholine and lysophosphatidylcholine and requires Ca(2+), Fe(3+), or Al(3+) for the activity. The chain is Lysophospholipase (PLB) from Kluyveromyces lactis (strain ATCC 8585 / CBS 2359 / DSM 70799 / NBRC 1267 / NRRL Y-1140 / WM37) (Yeast).